The following is a 463-amino-acid chain: Glutamate--tRNA ligase (463 aa).

A 'HIGH' region motif is present at residues 10-20 (PSPTGHLHIGG). The short motif at 236–240 (KLSKR) is the 'KMSKS' region element. Lys239 is an ATP binding site.

It belongs to the class-I aminoacyl-tRNA synthetase family. Glutamate--tRNA ligase type 1 subfamily. As to quaternary structure, monomer.

It localises to the cytoplasm. It catalyses the reaction tRNA(Glu) + L-glutamate + ATP = L-glutamyl-tRNA(Glu) + AMP + diphosphate. Its function is as follows. Catalyzes the attachment of glutamate to tRNA(Glu) in a two-step reaction: glutamate is first activated by ATP to form Glu-AMP and then transferred to the acceptor end of tRNA(Glu). The polypeptide is Glutamate--tRNA ligase (Nitratidesulfovibrio vulgaris (strain ATCC 29579 / DSM 644 / CCUG 34227 / NCIMB 8303 / VKM B-1760 / Hildenborough) (Desulfovibrio vulgaris)).